The following is a 649-amino-acid chain: tRNA-guanine(15) transglycosylase (649 aa).

Asp-88 acts as the Nucleophile in catalysis. Substrate is bound by residues Asp-123 and Ala-194. Residues Cys-280, Cys-282, and Cys-285 each coordinate Zn(2+). The PUA domain occupies 573-648 (NYRIVIDSSV…VAATLRGGIK (76 aa)).

Belongs to the archaeosine tRNA-ribosyltransferase family. The cofactor is Zn(2+).

It catalyses the reaction guanosine(15) in tRNA + 7-cyano-7-deazaguanine = 7-cyano-7-carbaguanosine(15) in tRNA + guanine. It functions in the pathway tRNA modification; archaeosine-tRNA biosynthesis. Exchanges the guanine residue with 7-cyano-7-deazaguanine (preQ0) at position 15 in the dihydrouridine loop (D-loop) of archaeal tRNAs. In Methanococcus maripaludis (strain C5 / ATCC BAA-1333), this protein is tRNA-guanine(15) transglycosylase.